The following is a 258-amino-acid chain: tRNA (guanine-N(7)-)-methyltransferase (258 aa).

Residues 1–42 (MPETPLMRDNGPVNHADQDAPAVPEEGQTKDSKGSRLHPRVT) are disordered. Positions 90, 115, 142, and 165 each coordinate S-adenosyl-L-methionine. Asp-165 is a catalytic residue. Residues Lys-169, Asp-201, and 235–238 (TKFE) contribute to the substrate site.

It belongs to the class I-like SAM-binding methyltransferase superfamily. TrmB family.

It carries out the reaction guanosine(46) in tRNA + S-adenosyl-L-methionine = N(7)-methylguanosine(46) in tRNA + S-adenosyl-L-homocysteine. It participates in tRNA modification; N(7)-methylguanine-tRNA biosynthesis. Its function is as follows. Catalyzes the formation of N(7)-methylguanine at position 46 (m7G46) in tRNA. The chain is tRNA (guanine-N(7)-)-methyltransferase from Rhodococcus jostii (strain RHA1).